Here is a 224-residue protein sequence, read N- to C-terminus: F420-dependent NADP reductase (224 aa).

NADP(+)-binding positions include 9–12, 31–32, K36, V74, V100, and A145; these read TGDQ and SR.

Belongs to the F420-dependent NADP reductase family. Homotetramer.

It catalyses the reaction reduced coenzyme F420-(gamma-L-Glu)(n) + NADP(+) = oxidized coenzyme F420-(gamma-L-Glu)(n) + NADPH + 2 H(+). In terms of biological role, catalyzes the reduction of NADP(+) with F420H(2) via hydride transfer, and the reverse reaction, i.e. the reduction of F420 with NADPH. Probably functions in the regeneration of NADPH required in biosynthetic reactions. This is F420-dependent NADP reductase from Methanothermobacter marburgensis (strain ATCC BAA-927 / DSM 2133 / JCM 14651 / NBRC 100331 / OCM 82 / Marburg) (Methanobacterium thermoautotrophicum).